We begin with the raw amino-acid sequence, 843 residues long: MSLISAVEDRDIHNIGKTSGGGSRTSSITSSKKSLKHGSKSLRKPKVYQTTGEPLSREALYKAKLKYGVYQSPAQSYSIGVSDAHAASDKAANLAHDNQTTVEAYKRMFIDPNATKAASKMGPKVVRNNSITSATSKTSKESQTKRKSKESPGAAASKAYSMTMETTSLSSQTNSRSYSITSASSVLSGASGSFNSTVNPKPKTLNLEKVLVGAEKKAESRIKERWEPEKTNFQYGVKTDEHGNLNQFSFSNEMMNNIMAKVDAPKAQDLQKVKKVSAEKEAKSMKFALGAANAVKDMHPGEDIDKSIALKAQKRETYLSQLTSQQVLTLARANVDRQLDIIEKSDMHRKLFTNMEYNKAAVAVAQSNHQKKTEFHNKINMGGGLFLSPEDITKIASGLISPVLGEVSERAEAQRAMDEEIAERTEAYNKSSNEWETMERSIISNDAKVLTTTANRHQTEKKTSQEKIKASFDALVARMDTKVAERETLLEDTKSKEIEFKKQMQQELKDEKARLDQDLEEWGKKCEQDITEARKEQEELLKPYHDDLANAEAEHKTLVEERDEINAEISRLQDAIVDHKRKISGYGNDLDAQKNRNIREDDKLLELGQTKESLESHLNDDVIILANKAKEQAELSTKEARLKQLEVDSLINERKSELNATEIELKKEKLNLLEAMKDVASARGDDKIDEEKVKKLIGMTSEEYLTQNKSVEKNVEDLPTQLEKIEEGDELKKEEIVGAETKNSGGDGVPVSTAAKEATETSSAVQTKEPEEKISIGNKSSGKEDANDCKSAEHSKEISVSQKAGNNKSLGVSPDSLEHTFSGFSQGSSIEDDQDAISNQEKK.

The tract at residues 1–53 (MSLISAVEDRDIHNIGKTSGGGSRTSSITSSKKSLKHGSKSLRKPKVYQTTGE) is disordered. At serine 2 the chain carries N-acetylserine. A Phosphoserine modification is found at serine 2. Basic residues predominate over residues 33–46 (KSLKHGSKSLRKPK). Serine 88 and serine 130 each carry phosphoserine. The tract at residues 120–174 (KMGPKVVRNNSITSATSKTSKESQTKRKSKESPGAAASKAYSMTMETTSLSSQTN) is disordered. Polar residues-rich tracts occupy residues 127–137 (RNNSITSATSK) and 163–174 (TMETTSLSSQTN). Serine 182, serine 401, serine 584, and serine 710 each carry phosphoserine. The interval 717-843 (DLPTQLEKIE…QDAISNQEKK (127 aa)) is disordered. Residue threonine 720 is modified to Phosphothreonine. Residues 752–764 (STAAKEATETSSA) show a composition bias toward low complexity. Residues serine 763 and serine 775 each carry the phosphoserine modification. Residues 781 to 797 (SGKEDANDCKSAEHSKE) show a composition bias toward basic and acidic residues. The segment covering 798–810 (ISVSQKAGNNKSL) has biased composition (polar residues). Phosphoserine is present on residues serine 816, serine 828, serine 829, and serine 838.

Belongs to the EIS1 family.

Its subcellular location is the cytoplasmic granule. The protein resides in the cell membrane. Functionally, required for normal formation of eisosomes, large cytoplasmic protein assemblies that localize to specialized domains on plasma membrane and mark the site of endocytosis. The polypeptide is Eisosome protein 1 (EIS1) (Saccharomyces cerevisiae (strain ATCC 204508 / S288c) (Baker's yeast)).